A 316-amino-acid chain; its full sequence is E3 ubiquitin-protein ligase rnf146 (316 aa).

The segment at 36–74 adopts an RING-type zinc-finger fold; that stretch reads CAICLQTCVHPVSLPCKHIFCYLCVKGASWLGRRCALCR. Residues 91–167 enclose the WWE domain; the sequence is EELKSASRGN…EHGRRRKIKR (77 aa). Residues Y107, R110, W114, Y144, Q153, R163, and K175 each coordinate a glycoprotein. Positions 257 to 316 are disordered; the sequence is GRNNIGEGEEGQPLINARMPAPSALLEESEPSDSNDHGSPTLQHNSLLVPQSNRLPFGNP. A compositionally biased stretch (polar residues) spans 293–310; it reads HGSPTLQHNSLLVPQSNR.

It is found in the cytoplasm. The protein resides in the cytosol. It localises to the nucleus. The enzyme catalyses S-ubiquitinyl-[E2 ubiquitin-conjugating enzyme]-L-cysteine + [acceptor protein]-L-lysine = [E2 ubiquitin-conjugating enzyme]-L-cysteine + N(6)-ubiquitinyl-[acceptor protein]-L-lysine.. It functions in the pathway protein modification; protein ubiquitination. E3 ubiquitin-protein ligase that specifically binds poly-ADP-ribosylated proteins and mediates their ubiquitination and subsequent degradation. May regulate many important biological processes, such as cell survival and DNA damage response. Acts as an activator of the Wnt signaling pathway by mediating the ubiquitination of poly-ADP-ribosylated proteins. Neuroprotective protein. Protects against cell death induced by DNA damaging agents and rescues cells from G1 arrest. Promotes cell survival after gamma-irradiation. Facilitates DNA repair. The chain is E3 ubiquitin-protein ligase rnf146 (rnf146) from Xenopus tropicalis (Western clawed frog).